Here is a 409-residue protein sequence, read N- to C-terminus: Nucleoprotein (409 aa).

Disordered regions lie at residues 1–32 (MASGKATGKTDAPAPVIKLGGPRPPKVGSSGN), 46–84 (SPQPKFEGSGVPDNENFKTSQQHGYWRRQARFKPGKGRR), 121–194 (ADVK…GSED), and 238–259 (VDQVFGPRTKGKEGNFGDDKMN). Residues 29 to 160 (SSGNASWFQA…GNFRWDFIPL (132 aa)) are RNA-binding. One can recognise a CoV N NTD domain in the interval 31–156 (GNASWFQAIK…GGPDGNFRWD (126 aa)). Positions 70-84 (YWRRQARFKPGKGRR) are enriched in basic residues. Residues 162 to 179 (RGRSGRSTAASSAASSRP) show a composition bias toward low complexity. Composition is skewed to basic and acidic residues over residues 180-192 (PSREGSRGRRSGS) and 247-259 (KGKEGNFGDDKMN). A phosphoserine; by host mark is found at S190 and S192. The CoV N CTD domain maps to 215–331 (TKAKADEMAH…QCVDGVGTRP (117 aa)). The dimerization stretch occupies residues 226 to 333 (RYCKRTIPPG…VDGVGTRPKD (108 aa)). The cysteines at positions 320 and 323 are disulfide-linked. Residues 326–409 (GVGTRPKDDE…GDSALGENEL (84 aa)) are disordered. The span at 341–356 (RSSSRPATRTSSPAPR) shows a compositional bias: low complexity. Over residues 358-367 (QRLKKEKRPK) the composition is skewed to basic residues. A compositionally biased stretch (basic and acidic residues) spans 368–384 (KQDDEVDKALTSDEERN). Phosphothreonine; by host is present on T378. S379 is modified (phosphoserine; by host).

This sequence belongs to the gammacoronavirus nucleocapsid protein family. In terms of assembly, homooligomer. Both monomeric and oligomeric forms interact with RNA. Interacts with protein M. Interacts with NSP3; this interaction serves to tether the genome to the newly translated replicase-transcriptase complex at a very early stage of infection. ADP-ribosylated. The ADP-ribosylation is retained in the virion during infection. Post-translationally, phosphorylated on serine and threonine residues.

Its subcellular location is the virion. The protein localises to the host endoplasmic reticulum-Golgi intermediate compartment. The protein resides in the host Golgi apparatus. Packages the positive strand viral genome RNA into a helical ribonucleocapsid (RNP) and plays a fundamental role during virion assembly through its interactions with the viral genome and membrane protein M. Plays an important role in enhancing the efficiency of subgenomic viral RNA transcription as well as viral replication. The sequence is that of Nucleoprotein from Avian infectious bronchitis virus (strain Gray) (IBV).